The following is a 248-amino-acid chain: Probable transcriptional regulatory protein RHE_CH03475 (248 aa).

The protein belongs to the TACO1 family.

It localises to the cytoplasm. This Rhizobium etli (strain ATCC 51251 / DSM 11541 / JCM 21823 / NBRC 15573 / CFN 42) protein is Probable transcriptional regulatory protein RHE_CH03475.